The chain runs to 241 residues: UPF0173 metal-dependent hydrolase Haur_4333 (241 aa).

The protein belongs to the UPF0173 family.

The sequence is that of UPF0173 metal-dependent hydrolase Haur_4333 from Herpetosiphon aurantiacus (strain ATCC 23779 / DSM 785 / 114-95).